The following is a 153-amino-acid chain: MTKKMNVESFNLDHTKVKAPYVRLVGVTEGANGDKVHKYDIRIKQPNKAHMEMPGLHSLEHLMAENIRNHSDAVLDIGPMGCQTGFYLSLINHDDYDDVLTMIEKTLEDVLQATEVPACNEVQCGWAANHSLLGAQEIAKEMLNEKASWSEVF.

Residues H57, H61, and C124 each contribute to the Fe cation site.

It belongs to the LuxS family. Homodimer. The cofactor is Fe cation.

The catalysed reaction is S-(5-deoxy-D-ribos-5-yl)-L-homocysteine = (S)-4,5-dihydroxypentane-2,3-dione + L-homocysteine. Involved in the synthesis of autoinducer 2 (AI-2) which is secreted by bacteria and is used to communicate both the cell density and the metabolic potential of the environment. The regulation of gene expression in response to changes in cell density is called quorum sensing. Catalyzes the transformation of S-ribosylhomocysteine (RHC) to homocysteine (HC) and 4,5-dihydroxy-2,3-pentadione (DPD). This is S-ribosylhomocysteine lyase from Oceanobacillus iheyensis (strain DSM 14371 / CIP 107618 / JCM 11309 / KCTC 3954 / HTE831).